Reading from the N-terminus, the 168-residue chain is Transcriptional repressor NrdR (168 aa).

The tract at residues 1 to 21 is disordered; that stretch reads MQCPACRHTDSRVLESRSSES. A zinc finger lies at 3–34; it reads CPACRHTDSRVLESRSSESGRSVRRRRECLSC. Residues 7–20 show a composition bias toward basic and acidic residues; that stretch reads RHTDSRVLESRSSE. Positions 49–139 constitute an ATP-cone domain; that stretch reads ISVIKRNGDR…VYRQFRGVRD (91 aa).

It belongs to the NrdR family. It depends on Zn(2+) as a cofactor.

In terms of biological role, negatively regulates transcription of bacterial ribonucleotide reductase nrd genes and operons by binding to NrdR-boxes. The chain is Transcriptional repressor NrdR from Synechococcus elongatus (strain ATCC 33912 / PCC 7942 / FACHB-805) (Anacystis nidulans R2).